The sequence spans 356 residues: Vesicular integral-membrane protein VIP36 (356 aa).

The first 44 residues, 1–44 (MAAEGWIWRWGWGRRCLGRPGLPGPGPGPATPLFLLLLLGPVVA), serve as a signal peptide directing secretion. The Lumenal segment spans residues 45-322 (DITDGNSEHL…FRSGPLTGWR (278 aa)). The L-type lectin-like domain occupies 52–276 (EHLKREHSLI…DIISMKLFQL (225 aa)). Positions 96 and 131 each coordinate a carbohydrate. 3 residues coordinate Ca(2+): aspartate 162, tyrosine 164, and asparagine 166. 164 to 166 (YPN) provides a ligand contact to a carbohydrate. A glycan (N-linked (GlcNAc...) asparagine) is linked at asparagine 183. Histidine 190 lines the a carbohydrate pocket. A Ca(2+)-binding site is contributed by aspartate 193. Cysteine 202 and cysteine 239 are joined by a disulfide. 260–262 (GDL) contacts a carbohydrate. The helical transmembrane segment at 323–345 (VFLLLLCALLGIIVCAVVGAVVF) threads the bilayer. Residues 346-356 (QKRQERNKRFY) are Cytoplasmic-facing.

In terms of assembly, monomer. The cofactor is Ca(2+). As to expression, expressed in kidney, liver, intestine, lung, spleen and heart. Low expression in brain.

It is found in the golgi apparatus membrane. Plays a role as an intracellular lectin in the early secretory pathway. Interacts with N-acetyl-D-galactosamine and high-mannose type glycans and may also bind to O-linked glycans. Involved in the transport and sorting of glycoproteins carrying high mannose-type glycans. The sequence is that of Vesicular integral-membrane protein VIP36 (LMAN2) from Canis lupus familiaris (Dog).